A 95-amino-acid polypeptide reads, in one-letter code: Hge-scorpine (95 aa).

An N-terminal signal peptide occupies residues 1–19 (MNTKLTVLCFLGIVTIVSC). Positions 55 to 94 (QFGCFANVDVKGDCKRHCKAEDKEGICHGTKCKCGVPISY) constitute a BetaSPN-type CS-alpha/beta domain. Disulfide bonds link Cys58-Cys81, Cys68-Cys86, and Cys72-Cys88.

This sequence belongs to the long chain scorpion toxin family. Class 3 subfamily. Expressed by the venom gland.

Its subcellular location is the secreted. Has antibacterial activity against B.subtilis, but not against S.aureus. Also has hemolytic and cytolytic activities. Since cell lysis occurs at the tested concentrations, observation of activity on potassium channels is impossible. In terms of biological role, blocks Kv1.1/KCNA1 (IC(50)=185 nM) potassium channels. Shows a weak hemolytic activity. This chain is Hge-scorpine, found in Hoffmannihadrurus gertschi (Scorpion).